The primary structure comprises 438 residues: Coenzyme A disulfide reductase (438 aa).

8–33 serves as a coordination point for FAD; sequence GAVAGGATCASQIRRLDKESDIIIFE. Substrate is bound by residues T15, Q19, R22, S39, and N42. C43 functions as the Nucleophile in the catalytic mechanism. The Redox-active role is filled by C43. Position 71 (K71) interacts with substrate. 151–166 serves as a coordination point for NADP(+); that stretch reads VLVVGAGYVSLEVLEN. 267–277 contacts FAD; it reads TNVPNIYVIGD. Residue H299 participates in substrate binding. Residue Y419 participates in FAD binding. Position 427 (K427) interacts with substrate.

This sequence belongs to the class-III pyridine nucleotide-disulfide oxidoreductase family. Homodimer. FAD is required as a cofactor.

The enzyme catalyses NADP(+) + 2 CoA = CoA-disulfide + NADPH + H(+). Its function is as follows. Catalyzes specifically the NADPH-dependent reduction of coenzyme A disulfide. This chain is Coenzyme A disulfide reductase, found in Staphylococcus aureus (strain MRSA252).